The chain runs to 371 residues: Poly(rC)-binding protein 3 (371 aa).

3 consecutive KH domains span residues 45–95, 129–182, and 293–357; these read TLTI…TITG, PVTL…TISG, and ASTH…QYLI.

As to expression, widely expressed, with highest levels in testis and fat tissues and lowest in heart.

It localises to the cytoplasm. Its function is as follows. Single-stranded nucleic acid binding protein that binds preferentially to oligo dC. The chain is Poly(rC)-binding protein 3 (Pcbp3) from Mus musculus (Mouse).